A 120-amino-acid polypeptide reads, in one-letter code: Large ribosomal subunit protein uL18 (120 aa).

Belongs to the universal ribosomal protein uL18 family. As to quaternary structure, part of the 50S ribosomal subunit; part of the 5S rRNA/L5/L18/L25 subcomplex. Contacts the 5S and 23S rRNAs.

Functionally, this is one of the proteins that bind and probably mediate the attachment of the 5S RNA into the large ribosomal subunit, where it forms part of the central protuberance. The protein is Large ribosomal subunit protein uL18 of Staphylococcus epidermidis (strain ATCC 35984 / DSM 28319 / BCRC 17069 / CCUG 31568 / BM 3577 / RP62A).